We begin with the raw amino-acid sequence, 416 residues long: Gasdermin-B (416 aa).

Positions 1-280 are triggers pyroptosis; sequence MFSVFEEITR…EKRKDVLNSL (280 aa). 2 consecutive transmembrane segments (beta stranded) span residues 83–101 and 102–125; these read EFQI…VRLP and KEIT…ENRI. Residues Lys-166, Lys-177, Lys-190, and Lys-192 each participate in a (Microbial infection) Glycyl lysine isopeptide (Lys-Gly) (interchain with G-Cter in ubiquitin) cross-link. 2 beta stranded membrane-spanning segments follow: residues 167-183 and 184-198; these read EETL…SQIS and QGHL…REVT. A disordered region spans residues 229–250; the sequence is KSFPEEKDGASSCLGKSLGSED. The stretch at 248-276 forms a coiled coil; that stretch reads SEDSRNMKEKLEDMESVLKDLTEEKRKDV. Residue Met-308 forms a (Microbial infection) Glycyl lysine isopeptide (Lys-Gly) (interchain with G-Cter in ubiquitin) linkage.

This sequence belongs to the gasdermin family. As to quaternary structure, homooligomer; homooligomeric ring-shaped pore complex containing 24-26 subunits when inserted in the membrane. In terms of processing, cleavage by granzyme A (GZMA) relieves autoinhibition by releasing the N-terminal moiety (Gasdermin-B, N-terminal) that initiates pyroptosis. Not cleaved by other granzymes. Major cleavage site takes places after Lys-244; a minor cleavage site takes place after Lys-229. Cleavage by neutrophil elastase ELANE, inhibits its ability to trigger pyroptosis. Post-translationally, palmitoylated. (Microbial infection) Ubiquitinated by S.flexneri IpaH7.8, leading to its degradation by the proteasome, thereby preventing its ability to form pores in bacterial-derived membranes. In terms of tissue distribution, in the gastrointestinal tract, expressed in proliferating cells, including in the basal cell layer of esophagus and in isthmus/neck of stomach.

Its subcellular location is the cytoplasm. It localises to the cell membrane. The full-length protein before cleavage is inactive: intramolecular interactions between N- and C-terminal domains mediate autoinhibition in the absence of activation signal. The intrinsic pyroptosis-inducing activity is carried by the released N-terminal moiety (Gasdermin-B, N-terminal) following cleavage by granzyme A (GZMA). In terms of biological role, precursor of a pore-forming protein that acts as a downstream mediator of granzyme-mediated cell death. This form constitutes the precursor of the pore-forming protein: upon cleavage, the released N-terminal moiety (Gasdermin-B, N-terminal) binds to membranes and forms pores, triggering pyroptosis. Also acts as a regulator of epithelial cell repair independently of programmed cell death: translocates to the plasma membrane and promotes epithelial maintenance and repair by regulating PTK2/FAK-mediated phosphorylation of PDGFA. Functionally, pore-forming protein produced by cleavage by granzyme A (GZMA), which causes membrane permeabilization and pyroptosis in target cells of cytotoxic T and natural killer (NK) cells. Key downstream mediator of granzyme-mediated cell death: (1) granzyme A (GZMA), delivered to target cells from cytotoxic T- and NK-cells, (2) specifically cleaves Gasdermin-B to generate this form. After cleavage, moves to the plasma membrane, homooligomerizes within the membrane and forms pores of 10-15 nanometers (nm) of inner diameter, triggering pyroptosis. The different isoforms recognize and bind different phospholipids on membranes, promoting cell death of different target cells. Its function is as follows. Precursor of a pore-forming protein that acts as a downstream mediator of granzyme-mediated cell death and mediates pyroptosis. Following cleavage and activation by granzyme A (GZMA), the N-terminal part binds to membrane inner leaflet lipids, homooligomerizes within the human plasma membrane and forms pores of 10-15 nanometers (nm) of inner diameter, triggering pyroptosis. Recognizes and binds membrane inner leaflet lipids of human cells, such as phosphatidylinositol 4-phosphate, phosphatidylinositol 5-phosphate, bisphosphorylated phosphatidylinositols, such as phosphatidylinositol (4,5)-bisphosphate, and more weakly to phosphatidic acid. Also binds sufatide, a component of the apical membrane of epithelial cells. Precursor of a pore-forming protein that acts as a downstream mediator of granzyme-mediated cell death and mediates pyroptosis of human cells. Following cleavage and activation by granzyme A (GZMA), the N-terminal part binds to membrane inner leaflet lipids, homooligomerizes within the human plasma membrane and forms pores of 10-15 nanometers (nm) of inner diameter, triggering pyroptosis. In terms of biological role, precursor of a pore-forming protein that acts as a downstream mediator of granzyme-mediated cell death and specifically mediates cell death of Gram-negative bacteria in response to infection. Following cleavage and activation by granzyme A (GZMA), the N-terminal part recognizes and binds phospholipids found on Gram-negative bacterial membranes, such as lipid A and cariolipin, homooligomerizes within the bacterial membranes and forms pores, triggering pyroptosis followed by cell death. In contrast to isoform 4, does not bind to membrane inner leaflet lipids of host human cell, such as phosphatidylinositol 4-phosphate, phosphatidylinositol 5-phosphate, bisphosphorylated phosphatidylinositols, such as phosphatidylinositol (4,5)-bisphosphate. Functionally, not able to trigger pyroptosis. The sequence is that of Gasdermin-B from Homo sapiens (Human).